The following is a 481-amino-acid chain: MHWSFPEMIRLFSDEYRSSMLSEGNFGVERESQRVNYSGDLALTPHPSVFGDKFENPRITTDFSESQIEMITPPLKSAEEVYKALNDINNEVKNALKGELLWPLSMPPRLPKEEDIPVAQFPDTEDGRQKQIYRNGLALRYGKKMQMISGIHYNFSFSDKMIDFIYRQLRIEKTKRQFIDEMYFSLTRNFLRYHWILIYLFGASPICDSTYNSVIFKELEKIEKCCPHCAGKIKNFNRYATSLRVSRFGYSDTDEKKYTVYFNSLREYETKIKKMMETESNKYSKLGIYKDGVQIQLNGNLLQSESEFYAPIRFKRNIKKGETQLTALVNRGVEYIEIRILDVNPFDKVGISVEQMNFLQVFNVFCLFEESKSIDEEQMERINTNHQLAALLGRNEDLMLYKYNDDSRIPLKNFGDEIFEKLRIVAKLMDKDNVEKKYSESVESEYKKLHNIELLPSERICREMDNDNRSYIQFGMEYAEA.

The protein belongs to the glutamate--cysteine ligase type 1 family. Type 1 subfamily.

The enzyme catalyses L-cysteine + L-glutamate + ATP = gamma-L-glutamyl-L-cysteine + ADP + phosphate + H(+). Its pathway is sulfur metabolism; glutathione biosynthesis; glutathione from L-cysteine and L-glutamate: step 1/2. This is Glutamate--cysteine ligase from Clostridium acetobutylicum (strain ATCC 824 / DSM 792 / JCM 1419 / IAM 19013 / LMG 5710 / NBRC 13948 / NRRL B-527 / VKM B-1787 / 2291 / W).